Consider the following 471-residue polypeptide: Cytochrome P450 monooxygenase afvE (471 aa).

Residues 265–285 (IIFYHFELSTPVAFFIIFAVY) form a helical membrane-spanning segment. Cys410 provides a ligand contact to heme.

This sequence belongs to the cytochrome P450 family. The cofactor is heme.

It is found in the membrane. It functions in the pathway secondary metabolite biosynthesis. In terms of biological role, cytochrome P450 monooxygenase; part of the gene cluster that mediates the biosynthesis of aflavarin, a bicoumarin that exhibits anti-insectan activity against the fungivorous beetle C.hemipterus. The chain is Cytochrome P450 monooxygenase afvE from Aspergillus flavus (strain ATCC 200026 / FGSC A1120 / IAM 13836 / NRRL 3357 / JCM 12722 / SRRC 167).